A 225-amino-acid polypeptide reads, in one-letter code: UPF0173 metal-dependent hydrolase Pars_0810 (225 aa).

This sequence belongs to the UPF0173 family.

The polypeptide is UPF0173 metal-dependent hydrolase Pars_0810 (Pyrobaculum arsenaticum (strain DSM 13514 / JCM 11321 / PZ6)).